Reading from the N-terminus, the 459-residue chain is GTPase Der (459 aa).

EngA-type G domains follow at residues 4–169 (PLVA…PEVT) and 179–355 (IAVS…AAHR). Residues 10 to 17 (GRPNVGKS), 57 to 61 (DTGGL), 120 to 123 (NKCE), 185 to 192 (GRPNVGKS), 232 to 236 (DTAGI), and 297 to 300 (NKWD) contribute to the GTP site. In terms of domain architecture, KH-like spans 356–441 (KRVPTAVVNE…PIRFLWRGKS (86 aa)).

It belongs to the TRAFAC class TrmE-Era-EngA-EngB-Septin-like GTPase superfamily. EngA (Der) GTPase family. Associates with the 50S ribosomal subunit.

GTPase that plays an essential role in the late steps of ribosome biogenesis. This is GTPase Der from Synechococcus sp. (strain JA-2-3B'a(2-13)) (Cyanobacteria bacterium Yellowstone B-Prime).